The sequence spans 566 residues: Oxygen-dependent choline dehydrogenase (566 aa).

Aspartate 7–glutamate 36 is an FAD binding site. The tract at residues asparagine 180–serine 202 is disordered. Histidine 474 acts as the Proton acceptor in catalysis.

It belongs to the GMC oxidoreductase family. Requires FAD as cofactor.

It carries out the reaction choline + A = betaine aldehyde + AH2. The catalysed reaction is betaine aldehyde + NAD(+) + H2O = glycine betaine + NADH + 2 H(+). It functions in the pathway amine and polyamine biosynthesis; betaine biosynthesis via choline pathway; betaine aldehyde from choline (cytochrome c reductase route): step 1/1. Functionally, involved in the biosynthesis of the osmoprotectant glycine betaine. Catalyzes the oxidation of choline to betaine aldehyde and betaine aldehyde to glycine betaine at the same rate. This chain is Oxygen-dependent choline dehydrogenase, found in Burkholderia orbicola (strain MC0-3).